The sequence spans 491 residues: Probable cysteine proteinase 024R (491 aa).

Catalysis depends on residues Cys132, His325, and Asn355. The chain crosses the membrane as a helical span at residues 467–487 (ALDLALLVLPALLIVIVVLIG).

Belongs to the peptidase C1 family.

The protein resides in the membrane. Probable cysteine protease. The chain is Probable cysteine proteinase 024R from Invertebrate iridescent virus 3 (IIV-3).